Here is a 269-residue protein sequence, read N- to C-terminus: 4-hydroxy-tetrahydrodipicolinate reductase (269 aa).

NAD(+)-binding positions include 9–14 (GAGGRM) and Glu35. Arg36 is a binding site for NADP(+). NAD(+)-binding positions include 98 to 100 (GTT) and 122 to 125 (ASNY). The active-site Proton donor/acceptor is the His155. A (S)-2,3,4,5-tetrahydrodipicolinate-binding site is contributed by His156. Catalysis depends on Lys159, which acts as the Proton donor. 165 to 166 (GT) is a binding site for (S)-2,3,4,5-tetrahydrodipicolinate.

The protein belongs to the DapB family.

It localises to the cytoplasm. It catalyses the reaction (S)-2,3,4,5-tetrahydrodipicolinate + NAD(+) + H2O = (2S,4S)-4-hydroxy-2,3,4,5-tetrahydrodipicolinate + NADH + H(+). The enzyme catalyses (S)-2,3,4,5-tetrahydrodipicolinate + NADP(+) + H2O = (2S,4S)-4-hydroxy-2,3,4,5-tetrahydrodipicolinate + NADPH + H(+). It participates in amino-acid biosynthesis; L-lysine biosynthesis via DAP pathway; (S)-tetrahydrodipicolinate from L-aspartate: step 4/4. In terms of biological role, catalyzes the conversion of 4-hydroxy-tetrahydrodipicolinate (HTPA) to tetrahydrodipicolinate. This is 4-hydroxy-tetrahydrodipicolinate reductase from Actinobacillus pleuropneumoniae serotype 7 (strain AP76).